The primary structure comprises 371 residues: Glutamate 5-kinase (371 aa).

K10 serves as a coordination point for ATP. Substrate-binding residues include S50, D137, and N149. ATP is bound by residues 169 to 170 (SD) and 208 to 214 (TGGMYTK). The PUA domain occupies 274–352 (QGKVYIDDGA…EEIKNILGED (79 aa)).

It belongs to the glutamate 5-kinase family.

The protein resides in the cytoplasm. The catalysed reaction is L-glutamate + ATP = L-glutamyl 5-phosphate + ADP. It functions in the pathway amino-acid biosynthesis; L-proline biosynthesis; L-glutamate 5-semialdehyde from L-glutamate: step 1/2. Functionally, catalyzes the transfer of a phosphate group to glutamate to form L-glutamate 5-phosphate. This Dictyoglomus thermophilum (strain ATCC 35947 / DSM 3960 / H-6-12) protein is Glutamate 5-kinase.